A 103-amino-acid chain; its full sequence is Small ribosomal subunit protein uS10 (103 aa).

Belongs to the universal ribosomal protein uS10 family. In terms of assembly, part of the 30S ribosomal subunit.

Involved in the binding of tRNA to the ribosomes. This Stenotrophomonas maltophilia (strain R551-3) protein is Small ribosomal subunit protein uS10.